Reading from the N-terminus, the 95-residue chain is uncharacterized protein (95 aa).

Positions 46–68 (GDRGTNGRTEAEHDGIPHSRKKV) are disordered.

This is an uncharacterized protein from Schizosaccharomyces pombe (strain 972 / ATCC 24843) (Fission yeast).